The primary structure comprises 139 residues: Actin-depolymerizing factor 2 (139 aa).

Residues 7–139 (GLAVSDECKV…SLDIVKSRTN (133 aa)) enclose the ADF-H domain.

It belongs to the actin-binding proteins ADF family. As to expression, expressed in pollen.

In terms of biological role, actin-depolymerizing protein. Severs actin filaments (F-actin) and binds to actin monomers. In Zea mays (Maize), this protein is Actin-depolymerizing factor 2 (ADF2).